The following is a 353-amino-acid chain: Holliday junction branch migration complex subunit RuvB (353 aa).

The tract at residues M1–Y183 is large ATPase domain (RuvB-L). ATP-binding positions include L22, R23, G64, K67, T68, S69, E130–F132, R173, Y183, and R220. T68 provides a ligand contact to Mg(2+). The tract at residues D184 to D254 is small ATPAse domain (RuvB-S). Residues A257–S353 form a head domain (RuvB-H) region. 2 residues coordinate DNA: R312 and R317.

Belongs to the RuvB family. Homohexamer. Forms an RuvA(8)-RuvB(12)-Holliday junction (HJ) complex. HJ DNA is sandwiched between 2 RuvA tetramers; dsDNA enters through RuvA and exits via RuvB. An RuvB hexamer assembles on each DNA strand where it exits the tetramer. Each RuvB hexamer is contacted by two RuvA subunits (via domain III) on 2 adjacent RuvB subunits; this complex drives branch migration. In the full resolvosome a probable DNA-RuvA(4)-RuvB(12)-RuvC(2) complex forms which resolves the HJ.

It localises to the cytoplasm. It catalyses the reaction ATP + H2O = ADP + phosphate + H(+). The RuvA-RuvB-RuvC complex processes Holliday junction (HJ) DNA during genetic recombination and DNA repair, while the RuvA-RuvB complex plays an important role in the rescue of blocked DNA replication forks via replication fork reversal (RFR). RuvA specifically binds to HJ cruciform DNA, conferring on it an open structure. The RuvB hexamer acts as an ATP-dependent pump, pulling dsDNA into and through the RuvAB complex. RuvB forms 2 homohexamers on either side of HJ DNA bound by 1 or 2 RuvA tetramers; 4 subunits per hexamer contact DNA at a time. Coordinated motions by a converter formed by DNA-disengaged RuvB subunits stimulates ATP hydrolysis and nucleotide exchange. Immobilization of the converter enables RuvB to convert the ATP-contained energy into a lever motion, pulling 2 nucleotides of DNA out of the RuvA tetramer per ATP hydrolyzed, thus driving DNA branch migration. The RuvB motors rotate together with the DNA substrate, which together with the progressing nucleotide cycle form the mechanistic basis for DNA recombination by continuous HJ branch migration. Branch migration allows RuvC to scan DNA until it finds its consensus sequence, where it cleaves and resolves cruciform DNA. The chain is Holliday junction branch migration complex subunit RuvB from Parafrankia sp. (strain EAN1pec).